The chain runs to 349 residues: tRNA pseudouridine synthase D (349 aa).

F27 provides a ligand contact to substrate. Residue D80 is the Nucleophile of the active site. N129 lines the substrate pocket. The region spanning 155–303 is the TRUD domain; sequence GVPNYFGAQR…VEAARRAMLL (149 aa). F329 is a binding site for substrate.

Belongs to the pseudouridine synthase TruD family.

It catalyses the reaction uridine(13) in tRNA = pseudouridine(13) in tRNA. In terms of biological role, responsible for synthesis of pseudouridine from uracil-13 in transfer RNAs. The protein is tRNA pseudouridine synthase D of Shigella flexneri.